The primary structure comprises 89 residues: Small ribosomal subunit protein uS15 (89 aa).

The protein belongs to the universal ribosomal protein uS15 family. In terms of assembly, part of the 30S ribosomal subunit. Forms a bridge to the 50S subunit in the 70S ribosome, contacting the 23S rRNA.

One of the primary rRNA binding proteins, it binds directly to 16S rRNA where it helps nucleate assembly of the platform of the 30S subunit by binding and bridging several RNA helices of the 16S rRNA. Its function is as follows. Forms an intersubunit bridge (bridge B4) with the 23S rRNA of the 50S subunit in the ribosome. In Shewanella loihica (strain ATCC BAA-1088 / PV-4), this protein is Small ribosomal subunit protein uS15.